Consider the following 340-residue polypeptide: Alcohol dehydrogenase (340 aa).

Residues C40 and H63 each contribute to the Zn(2+) site.

Belongs to the zinc-containing alcohol dehydrogenase family. It depends on Zn(2+) as a cofactor.

The enzyme catalyses a primary alcohol + NAD(+) = an aldehyde + NADH + H(+). It catalyses the reaction a secondary alcohol + NAD(+) = a ketone + NADH + H(+). This is Alcohol dehydrogenase (adhA) from Rhizobium meliloti (strain 1021) (Ensifer meliloti).